The primary structure comprises 569 residues: AP-4 complex accessory subunit Tepsin (569 aa).

The ENTH domain maps to 8-141 (RDRLSFLHRL…FSDALPQPPS (134 aa)). Positions 196-298 (VRPGPDNPCT…SGASREPGDL (103 aa)) are disordered. Over residues 219–229 (VTPSASHTHPN) the composition is skewed to polar residues. Over residues 260–292 (SSPSSQNSSCTSNLSRASDSVSRSGSDSHSGAS) the composition is skewed to low complexity. A Phosphoserine modification is found at Ser-400. The tract at residues 467–524 (VPRSPVPTPSPDTLPPALQDPGELRTQLVCSSEPGTGSEQRLENTDTPKDSSSPCPWS) is disordered. Pro residues predominate over residues 470-480 (SPVPTPSPDTL). Over residues 494-505 (LVCSSEPGTGSE) the composition is skewed to polar residues. Residues 506-515 (QRLENTDTPK) show a composition bias toward basic and acidic residues. An interaction with AP4B1 region spans residues 525–535 (PNSLFAGMELV). Residues 559–569 (SEPSAFAFLNM) form an interaction with AP4E1 region.

Interacts with AP4B1 and AP4E1; the interaction is direct and mediates the association of TEPSIN with the adapter-like complex 4 (AP-4), a heterotetramer composed of AP4B1, AP4E1, AP4M1 and AP4S1.

The protein resides in the golgi apparatus. Its subcellular location is the trans-Golgi network membrane. The protein localises to the cytoplasmic vesicle. It localises to the cytoplasm. It is found in the cytosol. Associates with the adapter-like complex 4 (AP-4) and may therefore play a role in vesicular trafficking of proteins at the trans-Golgi network. This Rattus norvegicus (Rat) protein is AP-4 complex accessory subunit Tepsin.